Consider the following 375-residue polypeptide: Succinyl-diaminopimelate desuccinylase (375 aa).

His66 lines the Zn(2+) pocket. Asp68 is an active-site residue. Asp99 contacts Zn(2+). Residue Glu133 is the Proton acceptor of the active site. Zn(2+) is bound by residues Glu134, Glu162, and His348.

It belongs to the peptidase M20A family. DapE subfamily. In terms of assembly, homodimer. It depends on Zn(2+) as a cofactor. Co(2+) serves as cofactor.

It catalyses the reaction N-succinyl-(2S,6S)-2,6-diaminopimelate + H2O = (2S,6S)-2,6-diaminopimelate + succinate. The protein operates within amino-acid biosynthesis; L-lysine biosynthesis via DAP pathway; LL-2,6-diaminopimelate from (S)-tetrahydrodipicolinate (succinylase route): step 3/3. Functionally, catalyzes the hydrolysis of N-succinyl-L,L-diaminopimelic acid (SDAP), forming succinate and LL-2,6-diaminopimelate (DAP), an intermediate involved in the bacterial biosynthesis of lysine and meso-diaminopimelic acid, an essential component of bacterial cell walls. The chain is Succinyl-diaminopimelate desuccinylase from Aeromonas salmonicida (strain A449).